The chain runs to 323 residues: rRNA 2'-O-methyltransferase fibrillarin (323 aa).

Residues 1–80 (MSFRPGSRGG…GARGGAKGGA (80 aa)) form a disordered region. Gly residues predominate over residues 7–78 (SRGGARGGRG…RGGARGGAKG (72 aa)). Asymmetric dimethylarginine is present on residues Arg8, Arg12, Arg15, Arg19, Arg25, Arg29, Arg35, Arg39, Arg43, Arg49, Arg53, Arg57, Arg61, Arg65, Arg69, and Arg73. S-adenosyl-L-methionine contacts are provided by residues 175–176 (TS), 194–195 (EF), 219–220 (DA), and 239–242 (DVAQ).

This sequence belongs to the methyltransferase superfamily. Fibrillarin family. In terms of assembly, component of box C/D small nucleolar ribonucleoprotein (snoRNP) particles that contain SNU13, NOP1, SIK1/NOP56 and NOP58, plus a guide RNA. Post-translationally, by homology to other fibrillarins, some or all of the N-terminal domain arginines are modified to asymmetric dimethylarginine (DMA).

The protein resides in the nucleus. Its subcellular location is the nucleolus. The enzyme catalyses L-glutaminyl-[histone H2A] + S-adenosyl-L-methionine = N(5)-methyl-L-glutaminyl-[histone H2A] + S-adenosyl-L-homocysteine + H(+). Functionally, S-adenosyl-L-methionine-dependent methyltransferase that has the ability to methylate both RNAs and proteins. Involved in pre-rRNA processing. Utilizes the methyl donor S-adenosyl-L-methionine to catalyze the site-specific 2'-hydroxyl methylation of ribose moieties in pre-ribosomal RNA. Site specificity is provided by a guide RNA that base pairs with the substrate. Methylation occurs at a characteristic distance from the sequence involved in base pairing with the guide RNA. Also acts as a protein methyltransferase by mediating methylation of 'Gln-105' of histone H2A (H2AQ105me), a modification that impairs binding of the FACT complex and is specifically present at 35S ribosomal DNA locus. This chain is rRNA 2'-O-methyltransferase fibrillarin (NOP1), found in Candida glabrata (strain ATCC 2001 / BCRC 20586 / JCM 3761 / NBRC 0622 / NRRL Y-65 / CBS 138) (Yeast).